A 203-amino-acid chain; its full sequence is Sporulation delaying protein C (203 aa).

The signal sequence occupies residues 1–32 (MKSKLLRLLIVSMVTILVFSLVGLSKESSTSA). Residues 33 to 140 (KENHTFSGED…KYSSNKVTPS (108 aa)) constitute a propeptide, removed in mature form. A disulfide bond links Cys141 and Cys147. The propeptide at 183–203 (SASNNSDLEAAAAKTLKLIHQ) is removed in mature form.

As to quaternary structure, proprotein probably interacts with chaperone CsaA. In terms of processing, production of active SDP (able to induce SdpI and kill cells) is a multi-step process that requires signal peptide cleavage (probably by SipS or SipT) as well as SdpA and SdpB. The disulfide bond is not required for maximum toxicity.

It localises to the secreted. Produces a 42-residue extracellular sporulation delaying protein (SDP) that collapses the proton motive force (probably both the membrane potential and pH gradient) across the cell membrane, which leads to autolysis; may form a proton channel. Induces the lysis of other B.subtilis cells that have not entered the sporulation pathway, inducing cannibalism to provide a source of nutrients to support sporulation, and at the same time delaying commitment to the energetically expensive and irreversible onset of sporulation. Addition of SDP to liquid cultures halts growth, leads to increased cell permeability and eventually cell lysis in a significant subset of the population, although some cells survive and resume growth after a lag period. Effects of SDP are irreversible within 10 minutes. Addition of SDP to solid cultures induces killing, it is much more effective than SKF (AC O31422). Has antibiotic action against Gram-positive Firmicutes (L.acidophilus, M.megaterium, P.polymyxa, S.aureus, S.epidermidis) but not Actinobacteria M.luteus or Gram-negative P.aeruginosa or K.pneumoniae. SDP induces expression of the sdpR-sdpI operon. Its maturation is dependent on SdpA and SdpB. Also functions as a ligand, binds to SdpI triggering a signal transduction cascade that protects the cell against the toxic effects of its own SDP. This is Sporulation delaying protein C from Bacillus subtilis (strain 168).